Reading from the N-terminus, the 441-residue chain is Arginine biosynthesis bifunctional protein ArgJ, mitochondrial (441 aa).

The N-terminal 8 residues, 1–8, are a transit peptide targeting the mitochondrion; sequence MRISSTLL. Substrate contacts are provided by T177, K204, T215, E301, N436, and S441. T215 acts as the Nucleophile in catalysis.

Belongs to the ArgJ family. In terms of assembly, heterodimer of an alpha and a beta chain. The alpha and beta chains are autoproteolytically processed from a single precursor protein within the mitochondrion.

It localises to the mitochondrion matrix. The catalysed reaction is N(2)-acetyl-L-ornithine + L-glutamate = N-acetyl-L-glutamate + L-ornithine. The enzyme catalyses L-glutamate + acetyl-CoA = N-acetyl-L-glutamate + CoA + H(+). The protein operates within amino-acid biosynthesis; L-arginine biosynthesis; L-ornithine and N-acetyl-L-glutamate from L-glutamate and N(2)-acetyl-L-ornithine (cyclic): step 1/1. It functions in the pathway amino-acid biosynthesis; L-arginine biosynthesis; N(2)-acetyl-L-ornithine from L-glutamate: step 1/4. Its activity is regulated as follows. Inhibited by ornithine. Functionally, catalyzes two activities which are involved in the cyclic version of arginine biosynthesis: the synthesis of acetylglutamate from glutamate and acetyl-CoA, and of ornithine by transacetylation between acetylornithine and glutamate. The polypeptide is Arginine biosynthesis bifunctional protein ArgJ, mitochondrial (Saccharomyces cerevisiae (strain ATCC 204508 / S288c) (Baker's yeast)).